The primary structure comprises 297 residues: Alpha-tubulin N-acetyltransferase 1 (297 aa).

Residues 1-184 enclose the N-acetyltransferase domain; sequence MDFPYDLNAL…NNFVVFAGFF (184 aa). Residues 118-131 and 154-163 each bind acetyl-CoA; these read FYVTETLQRHGYGS and SPKFLSFLEK. The disordered stretch occupies residues 226–297; the sequence is FVRPGGPPHS…SLNRSRLSFH (72 aa). Pro residues predominate over residues 230–240; it reads GGPPHSPPLLP. A compositionally biased stretch (low complexity) spans 241–264; sequence SSPQSRSLSVGSSPSRAPLRPAAA. Polar residues-rich tracts occupy residues 266–278 and 286–297; these read VLQQGQTPSSPLN and TSSLNRSRLSFH.

The protein belongs to the acetyltransferase ATAT1 family. Monomer.

The protein localises to the cytoplasm. The protein resides in the membrane. Its subcellular location is the clathrin-coated pit. It localises to the cell junction. It is found in the focal adhesion. The protein localises to the cell projection. The protein resides in the axon. Its subcellular location is the cytoskeleton. It localises to the spindle. It catalyses the reaction L-lysyl-[alpha-tubulin] + acetyl-CoA = N(6)-acetyl-L-lysyl-[alpha-tubulin] + CoA + H(+). Its function is as follows. Specifically acetylates 'Lys-40' in alpha-tubulin on the lumenal side of microtubules. Promotes microtubule destabilization and accelerates microtubule dynamics; this activity may be independent of acetylation activity. Acetylates alpha-tubulin with a slow enzymatic rate, due to a catalytic site that is not optimized for acetyl transfer. Enters the microtubule through each end and diffuses quickly throughout the lumen of microtubules. Acetylates only long/old microtubules because of its slow acetylation rate since it does not have time to act on dynamically unstable microtubules before the enzyme is released. May be involved in neuron development. Acetylates alpha-tubulin in neurons, but not in cilia. This is Alpha-tubulin N-acetyltransferase 1 from Danio rerio (Zebrafish).